A 127-amino-acid chain; its full sequence is Modulator protein MzrA (127 aa).

At 1 to 10 the chain is on the cytoplasmic side; the sequence is MVISPLALRR. Residues 11-31 form a helical membrane-spanning segment; that stretch reads LSYGLIALVLLSALILVWTAL. Over 32–127 the chain is Periplasmic; sequence QRQESTLAIR…RLRDTSHRFG (96 aa).

It belongs to the MzrA family. As to quaternary structure, interacts with EnvZ.

The protein resides in the cell inner membrane. In terms of biological role, modulates the activity of the EnvZ/OmpR two-component regulatory system, probably by directly modulating EnvZ enzymatic activity and increasing stability of phosphorylated OmpR. In Enterobacter sp. (strain 638), this protein is Modulator protein MzrA.